The sequence spans 253 residues: MDNRFATAFVIACVLSLISTIYMAASIGTDFWYEYRSPVQENSSDLNKSIWDEFISDEADEKTYNDALFRYNGTVGLWRRCITIPKNMHWYSPPERTESFDVVTKCVSFTLTEQFMEKFVDPGNHNSGIDLLRTYLWRCQFLLPFVSLGLMCFGALIGLCACICRSLYPTIATGILHLLAGLCTLGSVSCYVAGIELLHQKLELPDSVSGEFGWSFCLACVSAPLQFMASALFIWAAHTNRKEYTLMKAYRVA.

The helical transmembrane segment at 5 to 25 threads the bilayer; it reads FATAFVIACVLSLISTIYMAA. Asn-42 and Asn-72 each carry an N-linked (GlcNAc...) asparagine glycan. 3 helical membrane passes run 141–161, 175–195, and 216–236; these read FLLP…GLCA, ILHL…VAGI, and FCLA…FIWA.

This sequence belongs to the PMP-22/EMP/MP20 family.

The protein localises to the cell junction. It is found in the tight junction. It localises to the cell membrane. In terms of biological role, plays a role in negatively regulating the permeability of cells to small molecules. The polypeptide is Claudin domain-containing protein 1 (CLDND1) (Macaca fascicularis (Crab-eating macaque)).